Here is a 61-residue protein sequence, read N- to C-terminus: Small ribosomal subunit protein uS14 (61 aa).

4 residues coordinate Zn(2+): cysteine 24, cysteine 27, cysteine 40, and cysteine 43.

Belongs to the universal ribosomal protein uS14 family. Zinc-binding uS14 subfamily. Part of the 30S ribosomal subunit. Contacts proteins S3 and S10. Zn(2+) serves as cofactor.

Its function is as follows. Binds 16S rRNA, required for the assembly of 30S particles and may also be responsible for determining the conformation of the 16S rRNA at the A site. This chain is Small ribosomal subunit protein uS14, found in Natranaerobius thermophilus (strain ATCC BAA-1301 / DSM 18059 / JW/NM-WN-LF).